Reading from the N-terminus, the 236-residue chain is Cytochrome b-c1 complex subunit Rieske-4, mitochondrial (236 aa).

A mitochondrion-targeting transit peptide spans 1 to 24 (MINFGSCWGLASVTSNSFSIISGF). At 25–73 (SSNSVSHAHDMGLVPDLPPTVAAIKNPTSKIVYDEHNHERYPPGDPSKR) the chain is on the mitochondrial matrix side. A helical transmembrane segment spans residues 74-96 (AFAYFVLTGGRFVYASLVRLLIL). Residues 97–236 (KFVLSMSASK…FLEENKLLIG (140 aa)) are Mitochondrial intermembrane-facing. One can recognise a Rieske domain in the interval 146-234 (INLANSVDLG…YSFLEENKLL (89 aa)). [2Fe-2S] cluster is bound by residues Cys-179, His-181, Cys-198, and His-201. The cysteines at positions 184 and 200 are disulfide-linked.

This sequence belongs to the Rieske iron-sulfur protein family. As to quaternary structure, component of the ubiquinol-cytochrome c oxidoreductase (cytochrome b-c1 complex, complex III, CIII), a multisubunit enzyme composed of 3 respiratory subunits cytochrome b, cytochrome c1 and Rieske protein, 2 core protein subunits, and several low-molecular weight protein subunits. The complex exists as an obligatory dimer and forms supercomplexes (SCs) in the inner mitochondrial membrane with cytochrome c oxidase (complex IV, CIV). The cofactor is [2Fe-2S] cluster.

Its subcellular location is the mitochondrion inner membrane. It catalyses the reaction a quinol + 2 Fe(III)-[cytochrome c](out) = a quinone + 2 Fe(II)-[cytochrome c](out) + 2 H(+)(out). Component of the ubiquinol-cytochrome c oxidoreductase, a multisubunit transmembrane complex that is part of the mitochondrial electron transport chain which drives oxidative phosphorylation. The respiratory chain contains 3 multisubunit complexes succinate dehydrogenase (complex II, CII), ubiquinol-cytochrome c oxidoreductase (cytochrome b-c1 complex, complex III, CIII) and cytochrome c oxidase (complex IV, CIV), that cooperate to transfer electrons derived from NADH and succinate to molecular oxygen, creating an electrochemical gradient over the inner membrane that drives transmembrane transport and the ATP synthase. The cytochrome b-c1 complex catalyzes electron transfer from ubiquinol to cytochrome c, linking this redox reaction to translocation of protons across the mitochondrial inner membrane, with protons being carried across the membrane as hydrogens on the quinol. In the process called Q cycle, 2 protons are consumed from the matrix, 4 protons are released into the intermembrane space and 2 electrons are passed to cytochrome c. The Rieske protein is a catalytic core subunit containing a [2Fe-2S] iron-sulfur cluster. It cycles between 2 conformational states during catalysis to transfer electrons from the quinol bound in the Q(0) site in cytochrome b to cytochrome c1. This chain is Cytochrome b-c1 complex subunit Rieske-4, mitochondrial, found in Nicotiana tabacum (Common tobacco).